The chain runs to 735 residues: Lebercilin-like protein (735 aa).

Disordered stretches follow at residues 12–54 (TEAH…NGSV) and 91–115 (EKPL…RGQK). Positions 43–53 (QSQNSQASNGS) are enriched in low complexity. Residues 205 to 335 (TAKHQNEVKN…QQKLKEKDRE (131 aa)) are a coiled coil. Disordered regions lie at residues 356–379 (YPKV…NMRH), 473–597 (SKEV…PRKH), 632–657 (KHRS…AGAR), and 685–735 (GRAG…KTVV). Basic and acidic residues predominate over residues 487 to 525 (TPRRPKENKEDQEKRAIPAEAEPTAKESEAHKDAEDKAL). The segment covering 528-541 (AAGNAGDAGDAGDA) has biased composition (low complexity). Basic and acidic residues-rich tracts occupy residues 542–553 (GNDREVVGEHKV), 573–588 (EVHG…EPGR), and 632–641 (KHRSEQELRL). Residues 689-707 (SSDSEAVSKSPQTGPQASA) show a composition bias toward polar residues.

Belongs to the LCA5 family.

The sequence is that of Lebercilin-like protein from Mus musculus (Mouse).